A 431-amino-acid polypeptide reads, in one-letter code: Dihydroorotase (431 aa).

2 residues coordinate Zn(2+): His-59 and His-61. Substrate is bound by residues 61 to 63 (HLR) and Asn-93. The Zn(2+) site is built by Asp-151, His-178, His-231, and Asp-304. The active site involves Asp-304. Substrate is bound by residues His-308 and 322 to 323 (FG).

It belongs to the metallo-dependent hydrolases superfamily. DHOase family. Class I DHOase subfamily. It depends on Zn(2+) as a cofactor.

It catalyses the reaction (S)-dihydroorotate + H2O = N-carbamoyl-L-aspartate + H(+). The protein operates within pyrimidine metabolism; UMP biosynthesis via de novo pathway; (S)-dihydroorotate from bicarbonate: step 3/3. Catalyzes the reversible cyclization of carbamoyl aspartate to dihydroorotate. In Thermoanaerobacter sp. (strain X514), this protein is Dihydroorotase.